The following is a 228-amino-acid chain: UPF0056 membrane protein MJ0972 (228 aa).

Helical transmembrane passes span 22–42 (FYIY…LIPI), 68–88 (VVLL…GITI), 133–153 (VPLA…MILI), 163–183 (GVVV…LSLT), and 201–221 (IMGL…IVGL).

Belongs to the UPF0056 (MarC) family.

Its subcellular location is the cell membrane. This chain is UPF0056 membrane protein MJ0972, found in Methanocaldococcus jannaschii (strain ATCC 43067 / DSM 2661 / JAL-1 / JCM 10045 / NBRC 100440) (Methanococcus jannaschii).